Reading from the N-terminus, the 332-residue chain is Ferredoxin--NADP reductase 2 (332 aa).

Residues aspartate 33, glutamine 41, tyrosine 46, valine 86, isoleucine 121, aspartate 282, and serine 325 each coordinate FAD.

This sequence belongs to the ferredoxin--NADP reductase type 2 family. As to quaternary structure, homodimer. Requires FAD as cofactor.

It carries out the reaction 2 reduced [2Fe-2S]-[ferredoxin] + NADP(+) + H(+) = 2 oxidized [2Fe-2S]-[ferredoxin] + NADPH. The sequence is that of Ferredoxin--NADP reductase 2 from Sulfolobus acidocaldarius (strain ATCC 33909 / DSM 639 / JCM 8929 / NBRC 15157 / NCIMB 11770).